Here is a 488-residue protein sequence, read N- to C-terminus: L-amino oxidase (488 aa).

Residues 60–61, 80–81, Arg88, and 104–107 each bind FAD; these read MS, EA, and GPMR. Positions 107 and 388 each coordinate substrate. A disulfide bridge connects residues Cys347 and Cys428. FAD-binding positions include Glu474 and 481–486; that span reads GWIDST. A substrate-binding site is contributed by 481 to 482; sequence GW.

Belongs to the flavin monoamine oxidase family. FIG1 subfamily. As to quaternary structure, monomer. This is in contrast with most of its orthologs, that are non-covalently linked homodimers. FAD is required as a cofactor. N-glycosylated. As to expression, expressed by the venom gland.

Its subcellular location is the secreted. The enzyme catalyses an L-alpha-amino acid + O2 + H2O = a 2-oxocarboxylate + H2O2 + NH4(+). The catalysed reaction is L-leucine + O2 + H2O = 4-methyl-2-oxopentanoate + H2O2 + NH4(+). Its function is as follows. Catalyzes an oxidative deamination of predominantly hydrophobic and aromatic L-amino acids, thus producing hydrogen peroxide that may contribute to the diverse toxic effects of this enzyme. Shows activity on L-Leu. Exhibits diverse biological activities, such as hemorrhage, hemolysis, edema, antibacterial and antiparasitic activities, as well as regulation of platelet aggregation. When tested on SW480 and SW620 human colon cancer cells, shows inhibition of cell proliferation, and induction of apoptosis, which is probably a consequence of the increased caspase-3 activity and the decreased Bcl-2 expression. The sequence is that of L-amino oxidase from Trimeresurus purpureomaculatus (Mangrove pit viper).